Reading from the N-terminus, the 428-residue chain is 3-phosphoshikimate 1-carboxyvinyltransferase (428 aa).

Residues Lys-23, Ser-24, and Arg-28 each contribute to the 3-phosphoshikimate site. Residue Lys-23 participates in phosphoenolpyruvate binding. Phosphoenolpyruvate contacts are provided by Gly-97 and Arg-125. Ser-170, Ser-171, Gln-172, Ser-198, Asp-314, Asn-337, and Lys-341 together coordinate 3-phosphoshikimate. Gln-172 serves as a coordination point for phosphoenolpyruvate. The active-site Proton acceptor is the Asp-314. 3 residues coordinate phosphoenolpyruvate: Arg-345, Arg-387, and Lys-412.

Belongs to the EPSP synthase family. Monomer.

The protein localises to the cytoplasm. The catalysed reaction is 3-phosphoshikimate + phosphoenolpyruvate = 5-O-(1-carboxyvinyl)-3-phosphoshikimate + phosphate. Its pathway is metabolic intermediate biosynthesis; chorismate biosynthesis; chorismate from D-erythrose 4-phosphate and phosphoenolpyruvate: step 6/7. Its function is as follows. Catalyzes the transfer of the enolpyruvyl moiety of phosphoenolpyruvate (PEP) to the 5-hydroxyl of shikimate-3-phosphate (S3P) to produce enolpyruvyl shikimate-3-phosphate and inorganic phosphate. In Yersinia pestis bv. Antiqua (strain Antiqua), this protein is 3-phosphoshikimate 1-carboxyvinyltransferase.